The primary structure comprises 47 residues: Antimicrobial peptide LCI (47 aa).

The protein localises to the secreted. Its function is as follows. Has antibacterial activity against X.oryzae pv oryzae and R.solanacearum, but not E.coli or P.carotovorum subsp carotovorum. May bind DNA or mRNA. In Bacillus subtilis, this protein is Antimicrobial peptide LCI.